Reading from the N-terminus, the 782-residue chain is uncharacterized protein (782 aa).

The segment at residues 22–50 (CRECHRLKLKCDRVWPCENCKKRGIPNLC) is a DNA-binding region (zn(2)-C6 fungal-type). Disordered stretches follow at residues 105–126 (GEKP…DPDH) and 645–665 (VPSS…AEKA). Positions 654-665 (SPDDSSMRAEKA) are enriched in basic and acidic residues.

The protein resides in the nucleus. This is an uncharacterized protein from Schizosaccharomyces pombe (strain 972 / ATCC 24843) (Fission yeast).